A 354-amino-acid chain; its full sequence is Protein-arginine kinase (354 aa).

In terms of domain architecture, Phosphagen kinase C-terminal spans 24 to 254 (IVLSSRIRLA…QQIIQQEKMA (231 aa)). ATP is bound by residues 27–31 (SSRIR), His92, Arg125, 176–180 (RASVM), and 207–212 (RGIYGE). An RDXXRA motif of the pArg binding pocket involved in allosteric regulation motif is present at residues 337–342 (RDYRRA).

It belongs to the ATP:guanido phosphotransferase family.

It catalyses the reaction L-arginyl-[protein] + ATP = N(omega)-phospho-L-arginyl-[protein] + ADP + H(+). Its activity is regulated as follows. Appears to be allosterically activated by the binding of pArg-containing polypeptides to the pArg-binding pocket localized in the C-terminal domain of McsB. Catalyzes the specific phosphorylation of arginine residues in a large number of proteins. Is part of the bacterial stress response system. Protein arginine phosphorylation has a physiologically important role and is involved in the regulation of many critical cellular processes, such as protein homeostasis, motility, competence, and stringent and stress responses, by regulating gene expression and protein activity. This chain is Protein-arginine kinase, found in Bacillus cereus (strain ATCC 10987 / NRS 248).